The sequence spans 522 residues: Cytochrome P450 1A3 (522 aa).

F229 contacts substrate. C463 contributes to the heme binding site.

It belongs to the cytochrome P450 family. It depends on heme as a cofactor. Liver.

It is found in the endoplasmic reticulum membrane. It localises to the microsome membrane. The catalysed reaction is an organic molecule + reduced [NADPH--hemoprotein reductase] + O2 = an alcohol + oxidized [NADPH--hemoprotein reductase] + H2O + H(+). In terms of biological role, cytochromes P450 are a group of heme-thiolate monooxygenases. They oxidize a variety of structurally unrelated compounds, including steroids, fatty acids, and xenobiotics. In Oncorhynchus mykiss (Rainbow trout), this protein is Cytochrome P450 1A3 (cyp1a3).